Consider the following 222-residue polypeptide: Cytochrome b6-f complex iron-sulfur subunit, chloroplastic (222 aa).

Residues 1 to 49 constitute a chloroplast transit peptide; it reads MASTALSTASNPTQLCRTRASSLCKPVKGLGFGRERIPRNITCMAGSIS. Residues 66–86 traverse the membrane as a helical segment; the sequence is LLGAISLPTFGMLVPYGSFLV. Residues 109 to 205 form the Rieske domain; that stretch reads VEDWLKTHGP…ADVDDGKVVF (97 aa). [2Fe-2S] cluster is bound by residues cysteine 151, histidine 153, cysteine 169, and histidine 172. The cysteines at positions 156 and 171 are disulfide-linked.

The protein belongs to the Rieske iron-sulfur protein family. The 4 large subunits of the cytochrome b6-f complex are cytochrome b6, subunit IV (17 kDa polypeptide, petD), cytochrome f and the Rieske protein, while the 4 small subunits are petG, petL, petM and petN. The complex functions as a dimer. [2Fe-2S] cluster serves as cofactor.

It localises to the plastid. The protein resides in the chloroplast thylakoid membrane. The enzyme catalyses 2 oxidized [plastocyanin] + a plastoquinol + 2 H(+)(in) = 2 reduced [plastocyanin] + a plastoquinone + 4 H(+)(out). Its function is as follows. Component of the cytochrome b6-f complex, which mediates electron transfer between photosystem II (PSII) and photosystem I (PSI), cyclic electron flow around PSI, and state transitions. This chain is Cytochrome b6-f complex iron-sulfur subunit, chloroplastic (petC), found in Triticum aestivum (Wheat).